The following is a 609-amino-acid chain: UvrABC system protein C (609 aa).

A GIY-YIG domain is found at 16–94 (SSAGVYRMYD…IKQYMPKYNV (79 aa)). The 36-residue stretch at 203 to 238 (QQVISALVDKMELAAERQAYEQAARFRDQIMALRKV) folds into the UVR domain.

The protein belongs to the UvrC family. In terms of assembly, interacts with UvrB in an incision complex.

Its subcellular location is the cytoplasm. In terms of biological role, the UvrABC repair system catalyzes the recognition and processing of DNA lesions. UvrC both incises the 5' and 3' sides of the lesion. The N-terminal half is responsible for the 3' incision and the C-terminal half is responsible for the 5' incision. This chain is UvrABC system protein C, found in Shewanella baltica (strain OS155 / ATCC BAA-1091).